The chain runs to 306 residues: Pantothenate kinase (306 aa).

90–97 (GSVAVGKS) contributes to the ATP binding site.

Belongs to the prokaryotic pantothenate kinase family.

The protein localises to the cytoplasm. The enzyme catalyses (R)-pantothenate + ATP = (R)-4'-phosphopantothenate + ADP + H(+). It functions in the pathway cofactor biosynthesis; coenzyme A biosynthesis; CoA from (R)-pantothenate: step 1/5. This Lactococcus lactis subsp. lactis (strain IL1403) (Streptococcus lactis) protein is Pantothenate kinase (coaA).